We begin with the raw amino-acid sequence, 594 residues long: UvrABC system protein C (594 aa).

The 78-residue stretch at 14–91 (DSPGCYLHKD…IQENMPKYNI (78 aa)) folds into the GIY-YIG domain. The region spanning 196–231 (DKIIDDLRSKMLEASNKQEFERAAEYRDLISGIATM) is the UVR domain.

This sequence belongs to the UvrC family. In terms of assembly, interacts with UvrB in an incision complex.

It is found in the cytoplasm. Its function is as follows. The UvrABC repair system catalyzes the recognition and processing of DNA lesions. UvrC both incises the 5' and 3' sides of the lesion. The N-terminal half is responsible for the 3' incision and the C-terminal half is responsible for the 5' incision. The polypeptide is UvrABC system protein C (Streptococcus equi subsp. zooepidemicus (strain MGCS10565)).